The sequence spans 194 residues: Putative 3-methyladenine DNA glycosylase (194 aa).

Belongs to the DNA glycosylase MPG family.

The polypeptide is Putative 3-methyladenine DNA glycosylase (Aeropyrum pernix (strain ATCC 700893 / DSM 11879 / JCM 9820 / NBRC 100138 / K1)).